A 175-amino-acid chain; its full sequence is MIDDDGYRPNVGIVICNRQGQVLWARRYGQHSWQFPQGGINPGETAEQAMYRELFEEVGLSKKDVRILASTRNWLRYKLPKRLVRWDTKPVCIGQKQKWFLLQLMCNDADINMQRSSTPEFDGWRWVSFWYPVRQVVSFKRDVYRRVMKEFAVTVMPMQEQAAQRQTPAYRRKRG.

The 144-residue stretch at 6–149 (GYRPNVGIVI…KRDVYRRVMK (144 aa)) folds into the Nudix hydrolase domain. The Nudix box signature appears at 38–59 (GGINPGETAEQAMYRELFEEVG).

Belongs to the Nudix hydrolase family. RppH subfamily. Requires a divalent metal cation as cofactor.

Accelerates the degradation of transcripts by removing pyrophosphate from the 5'-end of triphosphorylated RNA, leading to a more labile monophosphorylated state that can stimulate subsequent ribonuclease cleavage. The sequence is that of RNA pyrophosphohydrolase from Serratia proteamaculans (strain 568).